The following is a 352-amino-acid chain: Ion-translocating oxidoreductase complex subunit D (352 aa).

Helical transmembrane passes span 20 to 40, 42 to 62, 78 to 109, 123 to 143, and 148 to 168; these read IMLL…WFFG, GTLV…ALVL, ALLT…VIIA, PAMI…TSWL, and IAVN…GHTA. FMN phosphoryl threonine is present on threonine 187. 5 consecutive transmembrane segments (helical) span residues 214–234, 242–262, 267–287, 301–321, and 322–342; these read ILAG…GLWL, WHIP…GWLF, LAAP…FFIL, LIFG…GGYP, and DGVA…DYYT.

It belongs to the NqrB/RnfD family. As to quaternary structure, the complex is composed of six subunits: RsxA, RsxB, RsxC, RsxD, RsxE and RsxG. FMN is required as a cofactor.

The protein resides in the cell inner membrane. Part of a membrane-bound complex that couples electron transfer with translocation of ions across the membrane. Required to maintain the reduced state of SoxR. The polypeptide is Ion-translocating oxidoreductase complex subunit D (Escherichia coli (strain SE11)).